We begin with the raw amino-acid sequence, 230 residues long: Type II restriction enzyme MjaV (230 aa).

It carries out the reaction Endonucleolytic cleavage of DNA to give specific double-stranded fragments with terminal 5'-phosphates.. Its function is as follows. A P subtype restriction enzyme that recognizes the double-stranded sequence 5'-GTAC-3'; the cleavage site is unknown. This is Type II restriction enzyme MjaV (mjaVR) from Methanocaldococcus jannaschii (strain ATCC 43067 / DSM 2661 / JAL-1 / JCM 10045 / NBRC 100440) (Methanococcus jannaschii).